We begin with the raw amino-acid sequence, 325 residues long: Olfactory receptor 10AC1 (325 aa).

Residues 1–26 are Extracellular-facing; that stretch reads MDSPSNATVPCGFLLQGFSEFPHLRP. Residue asparagine 6 is glycosylated (N-linked (GlcNAc...) asparagine). A helical membrane pass occupies residues 27-47; the sequence is VLFLLLLGVHLATLGGNLLIL. The Cytoplasmic portion of the chain corresponds to 48 to 57; the sequence is VAVASMPSRQ. The chain crosses the membrane as a helical span at residues 58-78; the sequence is PMLLFLCQLSAIELCYTLVVV. At 79–101 the chain is on the extracellular side; that stretch reads PRSLVDLSTPGHRRGSPISFLSC. Residues 102–122 traverse the membrane as a helical segment; that stretch reads AFQMQMFVALGGAECFLLAAM. The Cytoplasmic portion of the chain corresponds to 123 to 147; the sequence is AYDRYVAICHPLRYAAVVTPGLCAR. A helical membrane pass occupies residues 148–168; that stretch reads LALACCLRGLAVSVGLTVAIF. The Extracellular portion of the chain corresponds to 169–171; sequence HLP. A helical transmembrane segment spans residues 172-192; that stretch reads FCGSRLLLHFFCDITALLHLA. Residues 193–200 are Cytoplasmic-facing; the sequence is CTRSYADE. Residues 201–221 form a helical membrane-spanning segment; it reads LPLLGACLVLLLLPSVLILAS. Residues 222–243 lie on the Extracellular side of the membrane; that stretch reads YGAIAAALRRLRCPKGRGKAAS. Residues 244–264 traverse the membrane as a helical segment; that stretch reads TCALHLAVTFLHYGCATFMYV. The Cytoplasmic segment spans residues 265 to 325; that stretch reads RPRASYSPRL…QAPGGDLREL (61 aa).

Belongs to the G-protein coupled receptor 1 family.

The protein resides in the cell membrane. In terms of biological role, odorant receptor. The protein is Olfactory receptor 10AC1 (OR10AC1) of Homo sapiens (Human).